Here is a 753-residue protein sequence, read N- to C-terminus: Transcription factor SOX-30 (753 aa).

Disordered stretches follow at residues 1–45 and 137–161; these read MERA…TLSA and AKKQKLGPSLDQSVGPRGAVETGPR. Over residues 7–23 the composition is skewed to pro residues; it reads EPPPQPRPLRPAPPPLP. Positions 337–405 form a DNA-binding region, HMG box; that stretch reads VKRPMNAFMV…KHREEFPGWV (69 aa). 2 disordered regions span residues 514–575 and 726–753; these read TGPS…SPCP and PTSTPSSIQQVNVTDSDEEEEEKVLRDL. Composition is skewed to polar residues over residues 531 to 563 and 726 to 739; these read TVKQPTPVSLESANRISSSASTAHARFATSTIQ and PTSTPSSIQQVNVT.

In terms of assembly, interacts with CTNNB1, competitively inhibiting CTNNB1-TCF7L2/TCF4 interaction.

The protein localises to the nucleus. It is found in the cytoplasm. In terms of biological role, acts both as a transcriptional activator and a repressor. Binds to the DNA sequence 5'-ACAAT-3' and shows a preference for guanine residues surrounding this core motif. Binds to its own promoter and activates its own transcription. Required to activate the expression of postmeiotic genes involved in spermiogenesis. Binds to the promoter region of CTNNB1 and represses its transcription which leads to inhibition of Wnt signaling. Also inhibits Wnt signaling by binding to the CTNNB1 protein, preventing interaction of CTNNB1 with TCF7L2/TCF4. This Homo sapiens (Human) protein is Transcription factor SOX-30 (SOX30).